We begin with the raw amino-acid sequence, 117 residues long: MSSEKEIQQQLSQMQGQGFDPEAQQRQEAQRQEANERRQGILIQILTPDARERLSRITIVKPEKSRQIEDLIIRAAQTGQLTERVDDAKLISLLEQLSEKTKKTTITMKRRTIEDDD.

The tract at residues 1 to 40 (MSSEKEIQQQLSQMQGQGFDPEAQQRQEAQRQEANERRQG) is disordered. Residues 8–22 (QQQLSQMQGQGFDPE) are compositionally biased toward low complexity. The segment covering 23–39 (AQQRQEAQRQEANERRQ) has biased composition (basic and acidic residues).

It belongs to the PDCD5 family.

The sequence is that of DNA-binding protein DDB_G0278111 from Dictyostelium discoideum (Social amoeba).